A 597-amino-acid polypeptide reads, in one-letter code: Miltiradiene synthase KSL2, chloroplastic (597 aa).

The N-terminal 51 residues, 1–51 (MSLAFNLRAIPFSGHTIQSRRGLFPVHESPMITTKPFVAVKCSLTTSTDLM), are a transit peptide targeting the chloroplast. Mg(2+) contacts are provided by Asp329, Asp333, Asn473, and Glu481. Positions 329–333 (DDFFD) match the DDXXD motif motif.

The protein belongs to the terpene synthase family. It depends on Mg(2+) as a cofactor.

The protein localises to the plastid. Its subcellular location is the chloroplast. The catalysed reaction is (+)-copalyl diphosphate = miltiradiene + diphosphate. It functions in the pathway secondary metabolite biosynthesis; terpenoid biosynthesis. Functionally, involved in the biosynthesis of ent-kaurene diterpenoids natural products such as oridonin, miltiradiene, eriocalyxin B and nezukol, known to exhibit antitumor, anti-inflammatory and antibacterial activities. Catalyzes the conversion of (+)-copalyl diphosphate ((+)-CPP) to miltiradiene. This chain is Miltiradiene synthase KSL2, chloroplastic, found in Isodon japonicus (Scutellaria japonica).